Consider the following 578-residue polypeptide: Arginine--tRNA ligase (578 aa).

Positions 122–132 (PNLAKEMHVGH) match the 'HIGH' region motif.

Belongs to the class-I aminoacyl-tRNA synthetase family. In terms of assembly, monomer.

The protein localises to the cytoplasm. The catalysed reaction is tRNA(Arg) + L-arginine + ATP = L-arginyl-tRNA(Arg) + AMP + diphosphate. This chain is Arginine--tRNA ligase, found in Pseudoalteromonas atlantica (strain T6c / ATCC BAA-1087).